The following is a 571-amino-acid chain: MRTSQYLLSTLKETPADAVVISHQLLLRAGMIRRLASGLYTWLPMGLRVLRKVETIVREEMNAAGALEVLMPAVQPAELWQESGRWEQYGPELLRLKDRHEREFCVGPTHEEVITDLARNELNSYKQLPINFYQIQTKFRDEIRPRFGLMRGREFIMKDAYSFHLSQDSLQQTYDGMYQAYSKIFSRLGLDFRPVQADNGSIGGSGSHEFHVLANSGEDDIVFSDSSDYAANIEKAEAVPRESARGSATEDMRLVDTPNTKTIAALVDGFQLPIEKTIKTLVVHGAEEGTLVALIVRGDHELNEIKAANQPLVASPLVFASEAEIRAAIGAGPGSLGPVNLPIACIVDRSVALMSDFAAGANIEDKHYFGVNWERDLPLPEVADLRNVVEGDPSPDGKGTLVIKRGIEVGHIFQLGTKYSEAMKLSVLSEQGKPVNLIMGCYGIGVSRVVAAAIEQNHDERGILWPSALAPFQIALVPLKYETESVKQATDKLYAELTAAGFEVLLDDRDKKTSPGVKFADMELIGIPHRIVISDRGLSEGVLEYKGRRDSESQNLPIGELMSFITEKLSR.

It belongs to the class-II aminoacyl-tRNA synthetase family. ProS type 1 subfamily. Homodimer.

Its subcellular location is the cytoplasm. The catalysed reaction is tRNA(Pro) + L-proline + ATP = L-prolyl-tRNA(Pro) + AMP + diphosphate. Its function is as follows. Catalyzes the attachment of proline to tRNA(Pro) in a two-step reaction: proline is first activated by ATP to form Pro-AMP and then transferred to the acceptor end of tRNA(Pro). As ProRS can inadvertently accommodate and process non-cognate amino acids such as alanine and cysteine, to avoid such errors it has two additional distinct editing activities against alanine. One activity is designated as 'pretransfer' editing and involves the tRNA(Pro)-independent hydrolysis of activated Ala-AMP. The other activity is designated 'posttransfer' editing and involves deacylation of mischarged Ala-tRNA(Pro). The misacylated Cys-tRNA(Pro) is not edited by ProRS. The protein is Proline--tRNA ligase of Pseudomonas aeruginosa (strain LESB58).